Reading from the N-terminus, the 727-residue chain is Putative inactive disease susceptibility protein LOV1 (727 aa).

The NB-ARC domain occupies 44–336; the sequence is EQSVEALAGH…AAEGIITSSD (293 aa). LRR repeat units follow at residues 459 to 484, 485 to 507, 509 to 530, 575 to 600, and 601 to 626; these read LPLL…IGDL, IHLR…LRNL, LLLY…LKEM, MTKL…LGQL, and RSLE…IVLN.

It belongs to the disease resistance NB-LRR family. RPP8/HRT subfamily.

The protein is Putative inactive disease susceptibility protein LOV1 (LOV1) of Arabidopsis thaliana (Mouse-ear cress).